We begin with the raw amino-acid sequence, 205 residues long: V-type ATP synthase subunit E (205 aa).

This sequence belongs to the V-ATPase E subunit family.

Produces ATP from ADP in the presence of a proton gradient across the membrane. The sequence is that of V-type ATP synthase subunit E from Treponema denticola (strain ATCC 35405 / DSM 14222 / CIP 103919 / JCM 8153 / KCTC 15104).